The primary structure comprises 433 residues: Oxidoreductase acuF (433 aa).

It participates in secondary metabolite biosynthesis. In terms of biological role, oxidoreductase; part of the gene cluster that mediates the biosynthesis of aculins. The pathway begins with the synthesis of 6-methylsalicylic acid by the polyketide synthase (PKS) acuA via condensation of acetate and malonate units. The 6-methylsalicylic acid decarboxylase acuB then catalyzes the decarboxylation of 6-methylsalicylic acid to yield m-cresol (also known as 3-methylphenol). These first reactions occur in the cytosol. The intermediate m-cresol is then transported into the endoplasmic reticulum where the cytochrome P450 monooxygenase acuC converts it to m-hydroxybenzyl alcohol, which is further converted to gentisyl alcohol by the cytochrome P450 monooxygenase acuD. Gentisyl alcohol is further oxidized by the oxidoreductase acuE that probably catalyzes hydroxylation of the aromatic ring. The aromatic system might then be opened by oxidation through a Baeyer-Villiger type of oxidation, which could be catalyzed by acuF, with the carboxylic acid at C-1 subsequently reduced to an aldehyde by acuG. Subsequently, a hemiacetal is formed, before the dehydrogenase acuH would reduce the double bond between C-4 and C-6. Finally, keto-enol tautomerism results in formation of aculinic acid, which exists as two diastereomers (both R/S configurations at C-1) by non-enzymatic hemiacetal formation. The carboxypeptidase acuI could be involved in the linking of aculinic acid to an aculene A moiety produced by the aculene biosynthesis cluster and which leads to the production of aculin A. AcuI may also be involved in the attachment of proline to aculinic acid to form epi-aculins A and B. This chain is Oxidoreductase acuF, found in Aspergillus aculeatus (strain ATCC 16872 / CBS 172.66 / WB 5094).